Here is a 1781-residue protein sequence, read N- to C-terminus: Chitin synthase 7 (1781 aa).

6 N-linked (GlcNAc...) asparagine glycosylation sites follow: asparagine 133, asparagine 534, asparagine 629, asparagine 644, asparagine 655, and asparagine 660. The next 2 helical transmembrane spans lie at 741–761 and 777–797; these read AWVA…LKFV and LVLF…IIGF. 2 N-linked (GlcNAc...) asparagine glycosylation sites follow: asparagine 889 and asparagine 1011. The chain crosses the membrane as a helical span at residues 1048 to 1068; sequence LLLAFAIIICIVTAVKFLAAL. Asparagine 1413 carries an N-linked (GlcNAc...) asparagine glycan. A run of 3 helical transmembrane segments spans residues 1444–1464, 1471–1491, and 1499–1519; these read LTGT…IYVL, IPYI…LIFI, and IGWM…LPLY. Asparagine 1526 carries an N-linked (GlcNAc...) asparagine glycan. The segment at 1677–1712 is disordered; sequence QANLSPAAGGGHSRSGTALGFSSGSRSPMPDAMRSQ. Positions 1690-1702 are enriched in polar residues; it reads RSGTALGFSSGSR. The DEK-C domain occupies 1723–1779; that stretch reads GPTDMAIVESIRSVLCEVDLDTVTKKQVRALVEQRLQTELVGERRTFMDRQIDHELE.

Belongs to the chitin synthase family. Class V subfamily.

It is found in the cell membrane. It carries out the reaction [(1-&gt;4)-N-acetyl-beta-D-glucosaminyl](n) + UDP-N-acetyl-alpha-D-glucosamine = [(1-&gt;4)-N-acetyl-beta-D-glucosaminyl](n+1) + UDP + H(+). Functionally, polymerizes chitin, a structural polymer of the cell wall and septum, by transferring the sugar moiety of UDP-GlcNAc to the non-reducing end of the growing chitin polymer. Shows additive effects in septum formation with CHS1, CHS2, CHS3A, CHS4, CHS5 and CHS6. Indispensable for perithecia formation and regulates conidiation. Plays an important role in the response to cell wall stress. Also required for hyphal growth and pathogenicity. This chain is Chitin synthase 7, found in Gibberella zeae (strain ATCC MYA-4620 / CBS 123657 / FGSC 9075 / NRRL 31084 / PH-1) (Wheat head blight fungus).